Here is a 207-residue protein sequence, read N- to C-terminus: MTKKIDSKELPPFEYPQGYQLFAGVDEVGRGPLVGAVVTAAVILDPNNPIEGLTDSKKLTEKKRDLLFPEIQEKALAWSLGRCEAHEIDELNILQATMVAMQRAIAGLKVTPDFALIDGNKVPELPMAGLAVVKGDLRVQEISAASILAKVTRDREMEVLDKEFPQYGFAKHKGYPTKAHFAAIEEHGVISEHRRSFKPVKRVLGIE.

An RNase H type-2 domain is found at 20 to 207; that stretch reads QLFAGVDEVG…KPVKRVLGIE (188 aa). Residues aspartate 26, glutamate 27, and aspartate 118 each coordinate a divalent metal cation.

This sequence belongs to the RNase HII family. The cofactor is Mn(2+). Mg(2+) is required as a cofactor.

It is found in the cytoplasm. It catalyses the reaction Endonucleolytic cleavage to 5'-phosphomonoester.. In terms of biological role, endonuclease that specifically degrades the RNA of RNA-DNA hybrids. The chain is Ribonuclease HII from Aliivibrio salmonicida (strain LFI1238) (Vibrio salmonicida (strain LFI1238)).